A 103-amino-acid polypeptide reads, in one-letter code: Nucleoid-associated protein CFF8240_0066 (103 aa).

This sequence belongs to the YbaB/EbfC family. As to quaternary structure, homodimer.

It is found in the cytoplasm. The protein localises to the nucleoid. Its function is as follows. Binds to DNA and alters its conformation. May be involved in regulation of gene expression, nucleoid organization and DNA protection. The chain is Nucleoid-associated protein CFF8240_0066 from Campylobacter fetus subsp. fetus (strain 82-40).